A 342-amino-acid polypeptide reads, in one-letter code: MQNEYSQFEQRKRDHIELALMPANQSSELNPFDHFSLVHEALPDLDFKDISIQSIRLKKKVEKPFIISSMTAGHSNALEINYRLMEACSKTKWAMGVGSQRRELTDKQAAFEWAPLRRDFPMVSLFSNLGIAQLIDTPISAIQRLIDTLQAEALIVHCNPLQECIQPEGTTNFQGCWTALEALVKKIASPVIIKETGCGFSKNTLLRLNNIGVAAVDVSGVGGTHWGRIEGHRANKDPIRHRTADTFRNWGIDTLQSIRNAISLNPSFEIWGSGGVRNGLDAAKLFALGATTVGFAKPMLEAALDSTGQVLTQMNTIEYELKTAMFCTGSRVLDDLKEKACP.

Residue 11-12 (RK) coordinates substrate. FMN contacts are provided by residues Ser68, 69–71 (SMT), Ser99, and Asn128. Residue 99 to 101 (SQR) coordinates substrate. Gln162 lines the substrate pocket. Glu163 is a Mg(2+) binding site. FMN contacts are provided by residues Lys194, Ser219, Thr224, 275–277 (GVR), and 296–297 (AK).

It belongs to the IPP isomerase type 2 family. As to quaternary structure, homooctamer. Dimer of tetramers. The cofactor is FMN. It depends on NADPH as a cofactor. Mg(2+) serves as cofactor.

It localises to the cytoplasm. It catalyses the reaction isopentenyl diphosphate = dimethylallyl diphosphate. Involved in the biosynthesis of isoprenoids. Catalyzes the 1,3-allylic rearrangement of the homoallylic substrate isopentenyl (IPP) to its allylic isomer, dimethylallyl diphosphate (DMAPP). This is Isopentenyl-diphosphate delta-isomerase from Legionella pneumophila (strain Corby).